We begin with the raw amino-acid sequence, 85 residues long: Antibacterial factor-related peptide 2 (85 aa).

The signal sequence occupies residues 1–17; the sequence is MFVRSLFLALLLATIVA. Residues 82-85 constitute a propeptide that is removed on maturation; it reads IKRG.

As to expression, expressed in the pharynx (at protein level). Detected in pharyngeal neurons and secretory cells.

The protein resides in the secreted. Functionally, exhibits antimicrobial activity against the Gram-positive bacteria B.subtilis IFO 3134, K.varians MAFF 118076 and S.aureus ATCC 6538P, the Gram-negative bacteria A.tumefaciens MAFF 1001, B.bacteriovorus MAFF 106101 and K.pneumoniae MAFF 519002, and the yeasts C.krusei MAFF 114085, K.thermotolerans MAFF 113848 and T.delbrueckii MAFF 113811. The sequence is that of Antibacterial factor-related peptide 2 from Caenorhabditis elegans.